The primary structure comprises 239 residues: LexA repressor (239 aa).

Positions 26-46 (FDEMKDALDLASKSGIHRLIT) form a DNA-binding region, H-T-H motif. Catalysis depends on for autocatalytic cleavage activity residues Ser-159 and Lys-197.

It belongs to the peptidase S24 family. Homodimer.

It catalyses the reaction Hydrolysis of Ala-|-Gly bond in repressor LexA.. Represses a number of genes involved in the response to DNA damage (SOS response), including recA and lexA. In the presence of single-stranded DNA, RecA interacts with LexA causing an autocatalytic cleavage which disrupts the DNA-binding part of LexA, leading to derepression of the SOS regulon and eventually DNA repair. This chain is LexA repressor, found in Allorhizobium ampelinum (strain ATCC BAA-846 / DSM 112012 / S4) (Agrobacterium vitis (strain S4)).